A 295-amino-acid chain; its full sequence is Tyrosine recombinase XerD (295 aa).

Positions 1–85 (MNTIIEEYLN…TIRSFHQFAL (85 aa)) constitute a Core-binding (CB) domain. Residues 106–289 (KLPDVLEIDE…SKSQIRKMYT (184 aa)) form the Tyr recombinase domain. Residues arginine 146, lysine 170, histidine 241, arginine 244, and histidine 267 contribute to the active site. Tyrosine 276 acts as the O-(3'-phospho-DNA)-tyrosine intermediate in catalysis.

The protein belongs to the 'phage' integrase family. XerD subfamily. As to quaternary structure, forms a cyclic heterotetrameric complex composed of two molecules of XerC and two molecules of XerD.

The protein resides in the cytoplasm. In terms of biological role, site-specific tyrosine recombinase, which acts by catalyzing the cutting and rejoining of the recombining DNA molecules. The XerC-XerD complex is essential to convert dimers of the bacterial chromosome into monomers to permit their segregation at cell division. It also contributes to the segregational stability of plasmids. The chain is Tyrosine recombinase XerD from Staphylococcus epidermidis (strain ATCC 35984 / DSM 28319 / BCRC 17069 / CCUG 31568 / BM 3577 / RP62A).